A 444-amino-acid chain; its full sequence is MREIVHVQGGQCGNQIGAKFWEVISDEHGVEPTGAYHGDSDLQLERINVYYNEATGGRYVPRAVLMDLEPGTMDSVRAGPFGQLFRPDNFVFGQTGAGNNWAKGHYTEGAELIDSVLDVVRKEAEGCDCLQGFQITHSLGGGTGSGMGTLLISKIREEYPDRIMETFSVFPSPKVSDTVVEPYNATLSVHQLVENADEVMVIDNEALYDICFRTLKLTTPTYGDLNHLVSACISGVTACLRFPGQLNSDLRKLAVNLIPFPRLHFFMIGFAPLTSRGSQQYRALTVPELTQQMFDAKNMMSASDPRHGRYLTASAMFRGRMSTKEVDEQMLNVQNKNSSYFVEWIPNNIKSSVCDIPPKGLKMSSTFVGNSTAIQEMFKRVAEQFTAMFRRKAFLHWYTGEGMDEMEFTEAESNMNDLVSEYQQYQDATAEEEGEMDEEEGAME.

GTP contacts are provided by Gln-11, Glu-69, Ser-138, Gly-142, Thr-143, Gly-144, Asn-204, and Asn-226. Glu-69 serves as a coordination point for Mg(2+).

This sequence belongs to the tubulin family. Dimer of alpha and beta chains. A typical microtubule is a hollow water-filled tube with an outer diameter of 25 nm and an inner diameter of 15 nM. Alpha-beta heterodimers associate head-to-tail to form protofilaments running lengthwise along the microtubule wall with the beta-tubulin subunit facing the microtubule plus end conferring a structural polarity. Microtubules usually have 13 protofilaments but different protofilament numbers can be found in some organisms and specialized cells. Requires Mg(2+) as cofactor.

It is found in the cytoplasm. The protein resides in the cytoskeleton. In terms of biological role, tubulin is the major constituent of microtubules, a cylinder consisting of laterally associated linear protofilaments composed of alpha- and beta-tubulin heterodimers. Microtubules grow by the addition of GTP-tubulin dimers to the microtubule end, where a stabilizing cap forms. Below the cap, tubulin dimers are in GDP-bound state, owing to GTPase activity of alpha-tubulin. In Euplotoides octocarinatus (Freshwater ciliate), this protein is Tubulin beta chain.